Consider the following 433-residue polypeptide: Aspartate--tRNA(Asp/Asn) ligase (433 aa).

An L-aspartate-binding site is contributed by glutamate 167. The tract at residues 189 to 192 is aspartate; sequence QLFK. Residue arginine 211 coordinates L-aspartate. Residues 211-213, 219-221, and glutamate 356 contribute to the ATP site; these read RAE and RHL. Mg(2+)-binding residues include glutamate 356 and serine 359. L-aspartate-binding residues include serine 359 and arginine 363. Position 404 to 407 (404 to 407) interacts with ATP; that stretch reads GGER.

The protein belongs to the class-II aminoacyl-tRNA synthetase family. Type 2 subfamily. As to quaternary structure, homodimer. Mg(2+) is required as a cofactor.

The protein localises to the cytoplasm. It catalyses the reaction tRNA(Asx) + L-aspartate + ATP = L-aspartyl-tRNA(Asx) + AMP + diphosphate. In terms of biological role, aspartyl-tRNA synthetase with relaxed tRNA specificity since it is able to aspartylate not only its cognate tRNA(Asp) but also tRNA(Asn). Reaction proceeds in two steps: L-aspartate is first activated by ATP to form Asp-AMP and then transferred to the acceptor end of tRNA(Asp/Asn). The polypeptide is Aspartate--tRNA(Asp/Asn) ligase (Haloferax volcanii (Halobacterium volcanii)).